Consider the following 120-residue polypeptide: Large ribosomal subunit protein uL22 (120 aa).

The protein belongs to the universal ribosomal protein uL22 family. Part of the 50S ribosomal subunit.

Its function is as follows. This protein binds specifically to 23S rRNA; its binding is stimulated by other ribosomal proteins, e.g. L4, L17, and L20. It is important during the early stages of 50S assembly. It makes multiple contacts with different domains of the 23S rRNA in the assembled 50S subunit and ribosome. The globular domain of the protein is located near the polypeptide exit tunnel on the outside of the subunit, while an extended beta-hairpin is found that lines the wall of the exit tunnel in the center of the 70S ribosome. This Borreliella afzelii (strain PKo) (Borrelia afzelii) protein is Large ribosomal subunit protein uL22.